The sequence spans 269 residues: Proenkephalin-A (269 aa).

A signal peptide spans 1–24 (MAQFLRLCIWLLALGSCLLATVQA). Cystine bridges form between Cys26–Cys48, Cys30–Cys52, and Cys33–Cys65. The segment at 165–191 (DNRAKDSHQQESTNNDEDSTSKRYGGF) is disordered. Propeptides lie at residues 198 to 209 (SPQLEDEAKELQ) and 219 to 229 (VGRPEWWMDYQ). Position 253 is a phosphoserine (Ser253).

It belongs to the opioid neuropeptide precursor family. Post-translationally, proenkephalin-A is cleaved by CTSL to generate Met-enkephalin. In terms of processing, processed and degraded by ACE. Probably cleaved by ACE. Post-translationally, processed by ACE to generate Met-enkephalin in the nucleus accumbens of the brain. In terms of processing, the N-terminal domain contains 6 conserved cysteines thought to be involved in disulfide bonding and/or processing. As to expression, expressed in brain, heart and testis.

Its subcellular location is the secreted. It is found in the cytoplasmic vesicle. The protein localises to the secretory vesicle. The protein resides in the chromaffin granule lumen. In terms of biological role, neuropeptide that competes with and mimic the effects of opiate drugs. They play a role in a number of physiologic functions, including pain perception and responses to stress. Functionally, met-enkephalin-Arg-Phe neuropeptide acts as a strong ligand of Mu-type opioid receptor OPRM1. Met-enkephalin-Arg-Phe-binding to OPRM1 in the nucleus accumbens of the brain increases activation of OPRM1, leading to long-term synaptic depression of glutamate release. Increases glutamate release in the striatum and decreases GABA concentration in the striatum. Its function is as follows. Increases glutamate release in the striatum. The chain is Proenkephalin-A (Penk) from Rattus norvegicus (Rat).